Here is an 814-residue protein sequence, read N- to C-terminus: Acyl-coenzyme A dehydrogenase (814 aa).

Catalysis depends on glutamate 497, which acts as the Proton acceptor.

The protein belongs to the acyl-CoA dehydrogenase family. Requires FAD as cofactor.

It catalyses the reaction a medium-chain 2,3-saturated fatty acyl-CoA + oxidized [electron-transfer flavoprotein] + H(+) = a medium-chain (2E)-enoyl-CoA + reduced [electron-transfer flavoprotein]. It carries out the reaction a long-chain 2,3-saturated fatty acyl-CoA + oxidized [electron-transfer flavoprotein] + H(+) = a long-chain (2E)-enoyl-CoA + reduced [electron-transfer flavoprotein]. It participates in lipid metabolism; fatty acid beta-oxidation. Catalyzes the dehydrogenation of acyl-coenzymes A (acyl-CoAs) to 2-enoyl-CoAs, the first step of the beta-oxidation cycle of fatty acid degradation. Is required for S.typhimurium to utilize medium- and long-chain fatty acids as sole carbon sources for growth. Is needed for bacterial survival during carbone-source starvation. In Salmonella typhimurium (strain LT2 / SGSC1412 / ATCC 700720), this protein is Acyl-coenzyme A dehydrogenase (fadE).